A 155-amino-acid polypeptide reads, in one-letter code: Myelin basic protein (155 aa).

Positions 1 to 72 (MASATTSDHA…HQGARRQTDD (72 aa)) are disordered. An N-acetylalanine; in forms C1, C2, C3 and C8 modification is found at Ala-2. Gln-12 bears the Deamidated glutamine; in forms C1, C2 and C3 mark. The segment covering 37-49 (GSRKVPEKGKEPA) has biased composition (basic and acidic residues). 2 positions are modified to phosphoserine; in forms C1, C2 and C3: Ser-73 and Ser-84. The segment at 113–155 (RAHYGAAGSSKSKDGFRGRRDGSGTLSSFFKMGKKGEGSPARR) is disordered. Ser-121 and Ser-122 each carry phosphoserine; in forms C1 and C3. Positions 123 to 134 (KSKDGFRGRRDG) are enriched in basic and acidic residues. Residues Ser-135, Ser-139, and Ser-140 each carry the phosphoserine; in forms C1, C2 and C3 modification.

Belongs to the myelin basic protein family. Post-translationally, several charge isomers are produced as a result of optional post-translational modifications, such as phosphorylation, deamidation and citrullination. Dogfish MBP contains four major components designated as C1, C2, C3 and C8. C1 and C3, but not C2 are phosphorylated at either Ser-121 or Ser-122; C2 is phosphorylated at 2 or 3 sites among Ser-135, Ser-139 and Ser-140. Hydroxyproline and citrulline are present but were not identified in either C1, C2 or C3, which suggests their presence in C8.

It localises to the myelin membrane. This protein may function to maintain proper structure of myelin. This Squalus acanthias (Spiny dogfish) protein is Myelin basic protein (MBP).